The sequence spans 869 residues: Leucine--tRNA ligase (869 aa).

Positions 42 to 52 (PYPSGKLHMGH) match the 'HIGH' region motif. Positions 624-628 (TMSKS) match the 'KMSKS' region motif. Lys-627 lines the ATP pocket.

Belongs to the class-I aminoacyl-tRNA synthetase family.

It localises to the cytoplasm. It catalyses the reaction tRNA(Leu) + L-leucine + ATP = L-leucyl-tRNA(Leu) + AMP + diphosphate. The sequence is that of Leucine--tRNA ligase from Nitrosomonas europaea (strain ATCC 19718 / CIP 103999 / KCTC 2705 / NBRC 14298).